Here is a 222-residue protein sequence, read N- to C-terminus: Protein MKS1 (222 aa).

The segment at M1–I61 is disordered. The span at P12–Q21 shows a compositional bias: polar residues. A Phosphoserine modification is found at S30. The segment covering D37–K46 has biased composition (basic residues). A compositionally biased stretch (pro residues) spans H47–I61. A Phosphoserine modification is found at S72. The VQ motif lies at F83–G92. The tract at residues G105–R130 is disordered. A phosphoserine mark is found at S108 and S120.

Interacts with MPK4, WRKY25 and WRKY33. Post-translationally, phosphorylated on serine residue by MPK4.

The protein resides in the nucleus. In terms of biological role, regulator of plant defense response. May contribute to MPK4-regulated defense activation by coupling the kinase to specific WRKY transcription factors. The chain is Protein MKS1 (MKS1) from Arabidopsis thaliana (Mouse-ear cress).